The primary structure comprises 933 residues: Exosome complex exonuclease RRP44 homolog A (933 aa).

Positions 50–163 (KIIVVDTNVV…LVTNDRENKR (114 aa)) constitute a PINc domain. Residues 217–321 (QEHKPMSEIT…NVDDAPRTSN (105 aa)) form the CSD1 domain. The tract at residues 296 to 336 (AEEDDEEDDTVHLAPDNVDDAPRTSNLSHETSGDKNAAPVR) is disordered. A CSD2 domain is found at 371-438 (ALFVSKDRRI…ETEVVLIEND (68 aa)). Residues 469–798 (RQDLRHLLVF…FVHRLLAASL (330 aa)) enclose the RNB domain. The Mg(2+) site is built by Asp-481 and Asp-490.

It belongs to the RNR ribonuclease family. In terms of assembly, probable component of the RNA exosome complex. It depends on Mg(2+) as a cofactor.

Its subcellular location is the nucleus. Functionally, catalytic component of the RNA exosome complex which has 3'-&gt;5' exoribonuclease activity and participates in a multitude of cellular RNA processing and degradation events. Required for 5.8S rRNA intermediate processing and the degradation of 5' external transcribed spacer (5' ETS), a maturation by-product of rRNA synthesis. Is not involved in the degradation of turnip crinkle virus (TCV) RNA and significant virus resistance. Required for normal development of female gametophytes and early embryogenesis. The chain is Exosome complex exonuclease RRP44 homolog A from Arabidopsis thaliana (Mouse-ear cress).